The following is a 699-amino-acid chain: 4-alpha-glucanotransferase (699 aa).

Belongs to the disproportionating enzyme family.

It localises to the cytoplasm. It catalyses the reaction Transfers a segment of a (1-&gt;4)-alpha-D-glucan to a new position in an acceptor, which may be glucose or a (1-&gt;4)-alpha-D-glucan.. This is 4-alpha-glucanotransferase (malQ) from Haemophilus influenzae (strain ATCC 51907 / DSM 11121 / KW20 / Rd).